Here is a 419-residue protein sequence, read N- to C-terminus: GTPase Obg (419 aa).

In terms of domain architecture, Obg spans 1 to 156; the sequence is MFIDKVNTYL…AEVNLELRLI (156 aa). Residues 157–325 form the OBG-type G domain; the sequence is ADVGLLGLPN…LLKEMLRMLE (169 aa). GTP contacts are provided by residues 163–170, 188–192, 209–212, 279–282, and 306–308; these read GLPNAGKS, FTTLA, DIPG, NKID, and SAA. The Mg(2+) site is built by S170 and T190. The OCT domain occupies 342–419; that stretch reads KKYIYEPEFK…IGDFEFTFEK (78 aa).

The protein belongs to the TRAFAC class OBG-HflX-like GTPase superfamily. OBG GTPase family. As to quaternary structure, monomer. Mg(2+) serves as cofactor.

The protein resides in the cytoplasm. An essential GTPase which binds GTP, GDP and possibly (p)ppGpp with moderate affinity, with high nucleotide exchange rates and a fairly low GTP hydrolysis rate. Plays a role in control of the cell cycle, stress response, ribosome biogenesis and in those bacteria that undergo differentiation, in morphogenesis control. This chain is GTPase Obg, found in Endomicrobium trichonymphae.